Here is a 498-residue protein sequence, read N- to C-terminus: ATP synthase subunit beta, chloroplastic (498 aa).

Gly172–Thr179 lines the ATP pocket.

It belongs to the ATPase alpha/beta chains family. As to quaternary structure, F-type ATPases have 2 components, CF(1) - the catalytic core - and CF(0) - the membrane proton channel. CF(1) has five subunits: alpha(3), beta(3), gamma(1), delta(1), epsilon(1). CF(0) has four main subunits: a(1), b(1), b'(1) and c(9-12).

Its subcellular location is the plastid. The protein resides in the chloroplast thylakoid membrane. It catalyses the reaction ATP + H2O + 4 H(+)(in) = ADP + phosphate + 5 H(+)(out). Its function is as follows. Produces ATP from ADP in the presence of a proton gradient across the membrane. The catalytic sites are hosted primarily by the beta subunits. The protein is ATP synthase subunit beta, chloroplastic of Saccharum hybrid (Sugarcane).